Consider the following 702-residue polypeptide: Elongation factor G (702 aa).

In terms of domain architecture, tr-type G spans 8–290 (ARYRNIGISA…AVIEYLPAPT (283 aa)). GTP contacts are provided by residues 17–24 (AHIDAGKT), 88–92 (DTPGH), and 142–145 (NKMD).

It belongs to the TRAFAC class translation factor GTPase superfamily. Classic translation factor GTPase family. EF-G/EF-2 subfamily.

The protein localises to the cytoplasm. Functionally, catalyzes the GTP-dependent ribosomal translocation step during translation elongation. During this step, the ribosome changes from the pre-translocational (PRE) to the post-translocational (POST) state as the newly formed A-site-bound peptidyl-tRNA and P-site-bound deacylated tRNA move to the P and E sites, respectively. Catalyzes the coordinated movement of the two tRNA molecules, the mRNA and conformational changes in the ribosome. The protein is Elongation factor G of Photorhabdus laumondii subsp. laumondii (strain DSM 15139 / CIP 105565 / TT01) (Photorhabdus luminescens subsp. laumondii).